The chain runs to 304 residues: Probable alpha-L-glutamate ligase 2 (304 aa).

Residues 107–290 (HQLLARKGVG…IAGAIIDYIV (184 aa)) form the ATP-grasp domain. ATP is bound by residues Lys144, 181-182 (EF), Asp190, and 214-216 (RSN). Mg(2+) is bound by residues Asp251, Glu263, and Asn265. Mn(2+) contacts are provided by Asp251, Glu263, and Asn265.

The protein belongs to the RimK family. Mg(2+) serves as cofactor. It depends on Mn(2+) as a cofactor.

This chain is Probable alpha-L-glutamate ligase 2, found in Hahella chejuensis (strain KCTC 2396).